Consider the following 364-residue polypeptide: Aminomethyltransferase (364 aa).

The protein belongs to the GcvT family. In terms of assembly, the glycine cleavage system is composed of four proteins: P, T, L and H.

It catalyses the reaction N(6)-[(R)-S(8)-aminomethyldihydrolipoyl]-L-lysyl-[protein] + (6S)-5,6,7,8-tetrahydrofolate = N(6)-[(R)-dihydrolipoyl]-L-lysyl-[protein] + (6R)-5,10-methylene-5,6,7,8-tetrahydrofolate + NH4(+). In terms of biological role, the glycine cleavage system catalyzes the degradation of glycine. The polypeptide is Aminomethyltransferase (Salmonella paratyphi B (strain ATCC BAA-1250 / SPB7)).